The following is a 108-amino-acid chain: Signal recognition particle 19 kDa protein (108 aa).

The protein belongs to the SRP19 family. In terms of assembly, part of the signal recognition particle protein translocation system, which is composed of SRP and FtsY. Archaeal SRP consists of a 7S RNA molecule of 300 nucleotides and two protein subunits: SRP54 and SRP19.

Its subcellular location is the cytoplasm. Functionally, involved in targeting and insertion of nascent membrane proteins into the cytoplasmic membrane. Binds directly to 7S RNA and mediates binding of the 54 kDa subunit of the SRP. This Thermococcus kodakarensis (strain ATCC BAA-918 / JCM 12380 / KOD1) (Pyrococcus kodakaraensis (strain KOD1)) protein is Signal recognition particle 19 kDa protein.